The primary structure comprises 93 residues: uncharacterized protein (93 aa).

The stretch at 36–69 (SEERLLSRLFEEMDELREAVEKEDWENLRDELLD) forms a coiled coil.

This is an uncharacterized protein from Archaeoglobus fulgidus (strain ATCC 49558 / DSM 4304 / JCM 9628 / NBRC 100126 / VC-16).